The sequence spans 135 residues: Small ribosomal subunit protein uS9 (135 aa).

Basic and acidic residues predominate over residues 108–118; that stretch reads VGDPRRTEPHK. The disordered stretch occupies residues 108 to 135; it reads VGDPRRTEPHKPNRSTKGPRAKRQKSYR. Residues 119-135 are compositionally biased toward basic residues; the sequence is PNRSTKGPRAKRQKSYR.

Belongs to the universal ribosomal protein uS9 family.

The chain is Small ribosomal subunit protein uS9 (rps9) from Pyrococcus horikoshii (strain ATCC 700860 / DSM 12428 / JCM 9974 / NBRC 100139 / OT-3).